Reading from the N-terminus, the 404-residue chain is Exodeoxyribonuclease 7 large subunit (404 aa).

It belongs to the XseA family. In terms of assembly, heterooligomer composed of large and small subunits.

The protein localises to the cytoplasm. The enzyme catalyses Exonucleolytic cleavage in either 5'- to 3'- or 3'- to 5'-direction to yield nucleoside 5'-phosphates.. Bidirectionally degrades single-stranded DNA into large acid-insoluble oligonucleotides, which are then degraded further into small acid-soluble oligonucleotides. The chain is Exodeoxyribonuclease 7 large subunit from Fusobacterium nucleatum subsp. nucleatum (strain ATCC 25586 / DSM 15643 / BCRC 10681 / CIP 101130 / JCM 8532 / KCTC 2640 / LMG 13131 / VPI 4355).